Reading from the N-terminus, the 353-residue chain is Photosystem II protein D1 (353 aa).

N-acetylthreonine is present on T2. Phosphothreonine is present on T2. Transmembrane regions (helical) follow at residues 29 to 46 (YIGW…TATS), 118 to 133 (HFLL…EWEL), and 142 to 156 (WIAV…AATA). H118 is a chlorophyll a binding site. Y126 is a pheophytin a binding site. [CaMn4O5] cluster is bound by residues D170 and E189. A helical transmembrane segment spans residues 197 to 218 (FHMLGVAGVFGGSLFSAMHGSL). H198 lines the chlorophyll a pocket. Residues H215 and 264–265 (SF) contribute to the a quinone site. H215 serves as a coordination point for Fe cation. H272 provides a ligand contact to Fe cation. Residues 274–288 (FLAAWPVVGIWFTAL) traverse the membrane as a helical segment. Residues H332, E333, D342, and A344 each contribute to the [CaMn4O5] cluster site. Residues 345 to 353 (GVEVPSTNG) constitute a propeptide that is removed on maturation.

It belongs to the reaction center PufL/M/PsbA/D family. In terms of assembly, PSII is composed of 1 copy each of membrane proteins PsbA, PsbB, PsbC, PsbD, PsbE, PsbF, PsbH, PsbI, PsbJ, PsbK, PsbL, PsbM, PsbT, PsbX, PsbY, PsbZ, Psb30/Ycf12, at least 3 peripheral proteins of the oxygen-evolving complex and a large number of cofactors. It forms dimeric complexes. It depends on The D1/D2 heterodimer binds P680, chlorophylls that are the primary electron donor of PSII, and subsequent electron acceptors. It shares a non-heme iron and each subunit binds pheophytin, quinone, additional chlorophylls, carotenoids and lipids. D1 provides most of the ligands for the Mn4-Ca-O5 cluster of the oxygen-evolving complex (OEC). There is also a Cl(-1) ion associated with D1 and D2, which is required for oxygen evolution. The PSII complex binds additional chlorophylls, carotenoids and specific lipids. as a cofactor. Tyr-161 forms a radical intermediate that is referred to as redox-active TyrZ, YZ or Y-Z. In terms of processing, C-terminally processed by CTPA; processing is essential to allow assembly of the oxygen-evolving complex and thus photosynthetic growth.

Its subcellular location is the plastid. The protein resides in the chloroplast thylakoid membrane. The catalysed reaction is 2 a plastoquinone + 4 hnu + 2 H2O = 2 a plastoquinol + O2. Its function is as follows. Photosystem II (PSII) is a light-driven water:plastoquinone oxidoreductase that uses light energy to abstract electrons from H(2)O, generating O(2) and a proton gradient subsequently used for ATP formation. It consists of a core antenna complex that captures photons, and an electron transfer chain that converts photonic excitation into a charge separation. The D1/D2 (PsbA/PsbD) reaction center heterodimer binds P680, the primary electron donor of PSII as well as several subsequent electron acceptors. In Morus indica (Mulberry), this protein is Photosystem II protein D1.